The sequence spans 215 residues: TLD domain-containing protein 2 (215 aa).

The tract at residues 1 to 46 (MRGLRWRYTRLPSQVEDTLSGEEGNEEEEEEEAAPDPAAAPEDPTV) is disordered. Residues 19–34 (LSGEEGNEEEEEEEAA) are compositionally biased toward acidic residues. The 162-residue stretch at 54 to 215 (QVLSASEIRQ…IQELEAWLLS (162 aa)) folds into the TLDc domain.

The protein belongs to the OXR1 family.

This Homo sapiens (Human) protein is TLD domain-containing protein 2 (TLDC2).